Reading from the N-terminus, the 246-residue chain is Proteasome subunit alpha type-5 (246 aa).

It belongs to the peptidase T1A family. The 26S proteasome consists of a 20S proteasome core and two 19S regulatory subunits. The 20S proteasome core is composed of 28 subunits that are arranged in four stacked rings, resulting in a barrel-shaped structure. The two end rings are each formed by seven alpha subunits, and the two central rings are each formed by seven beta subunits. The catalytic chamber with the active sites is on the inside of the barrel.

The protein localises to the cytoplasm. Its subcellular location is the nucleus. In terms of biological role, the proteasome is a multicatalytic proteinase complex which is characterized by its ability to cleave peptides with Arg, Phe, Tyr, Leu, and Glu adjacent to the leaving group at neutral or slightly basic pH. The proteasome has an ATP-dependent proteolytic activity. The protein is Proteasome subunit alpha type-5 of Trypanosoma brucei brucei.